The sequence spans 534 residues: Membrane-bound lytic murein transglycosylase F (534 aa).

A signal peptide spans 1–24 (MQISQFNRLKRSALLFASVLLLSA). Residues 25–285 (CQIESEPKSE…TLEEKYIGHI (261 aa)) form a non-LT domain region. The LT domain stretch occupies residues 287–534 (AFDYVDTRAF…AEQTPVPKAE (248 aa)). Residue glutamate 330 is part of the active site. Positions 507–534 (VSGAVEVTPPPEENAPQEAEQTPVPKAE) are disordered. Over residues 520–534 (NAPQEAEQTPVPKAE) the composition is skewed to low complexity.

It in the N-terminal section; belongs to the bacterial solute-binding protein 3 family. In the C-terminal section; belongs to the transglycosylase Slt family.

It is found in the cell outer membrane. It carries out the reaction Exolytic cleavage of the (1-&gt;4)-beta-glycosidic linkage between N-acetylmuramic acid (MurNAc) and N-acetylglucosamine (GlcNAc) residues in peptidoglycan, from either the reducing or the non-reducing ends of the peptidoglycan chains, with concomitant formation of a 1,6-anhydrobond in the MurNAc residue.. In terms of biological role, murein-degrading enzyme that degrades murein glycan strands and insoluble, high-molecular weight murein sacculi, with the concomitant formation of a 1,6-anhydromuramoyl product. Lytic transglycosylases (LTs) play an integral role in the metabolism of the peptidoglycan (PG) sacculus. Their lytic action creates space within the PG sacculus to allow for its expansion as well as for the insertion of various structures such as secretion systems and flagella. This chain is Membrane-bound lytic murein transglycosylase F, found in Vibrio campbellii (strain ATCC BAA-1116).